The following is a 523-amino-acid chain: Sensory neuron membrane protein 1 (523 aa).

Residues 1–11 (MQLPKELKYAA) lie on the Cytoplasmic side of the membrane. The helical transmembrane segment at 12–32 (IAGGVALFGLIFGWVLFPTIL) threads the bilayer. Residues 33 to 458 (KSQLKKEMAL…HQLFIPKRVV (426 aa)) lie on the Extracellular side of the membrane. Residues asparagine 67 and asparagine 229 are each glycosylated (N-linked (GlcNAc...) asparagine). 3 disulfides stabilise this stretch: cysteine 268-cysteine 333, cysteine 297-cysteine 352, and cysteine 335-cysteine 341. N-linked (GlcNAc...) asparagine glycosylation is present at asparagine 440. Residues 459–479 (GVLRWWVVSFGSLGAVIGIVF) traverse the membrane as a helical segment. At 480–523 (HFRDHIMRLAVSGDTKVSKVTPEEPEQKDISVIGQAQEPAKVNI) the chain is on the cytoplasmic side.

This sequence belongs to the CD36 family. Detected in sensory neurons in the antenna.

It is found in the cell membrane. Plays an olfactory role that is not restricted to pheromone sensitivity. The polypeptide is Sensory neuron membrane protein 1 (Heliothis virescens (Tobacco budworm moth)).